The chain runs to 1342 residues: DNA-directed RNA polymerase subunit beta (1342 aa).

Belongs to the RNA polymerase beta chain family. The RNAP catalytic core consists of 2 alpha, 1 beta, 1 beta' and 1 omega subunit. When a sigma factor is associated with the core the holoenzyme is formed, which can initiate transcription.

It carries out the reaction RNA(n) + a ribonucleoside 5'-triphosphate = RNA(n+1) + diphosphate. DNA-dependent RNA polymerase catalyzes the transcription of DNA into RNA using the four ribonucleoside triphosphates as substrates. This chain is DNA-directed RNA polymerase subunit beta, found in Aeromonas salmonicida (strain A449).